A 426-amino-acid polypeptide reads, in one-letter code: Glutamate-1-semialdehyde 2,1-aminomutase (426 aa).

Lys-265 is modified (N6-(pyridoxal phosphate)lysine).

This sequence belongs to the class-III pyridoxal-phosphate-dependent aminotransferase family. HemL subfamily. Homodimer. Pyridoxal 5'-phosphate serves as cofactor.

It is found in the cytoplasm. The enzyme catalyses (S)-4-amino-5-oxopentanoate = 5-aminolevulinate. It functions in the pathway porphyrin-containing compound metabolism; protoporphyrin-IX biosynthesis; 5-aminolevulinate from L-glutamyl-tRNA(Glu): step 2/2. The chain is Glutamate-1-semialdehyde 2,1-aminomutase from Cronobacter sakazakii (strain ATCC BAA-894) (Enterobacter sakazakii).